The primary structure comprises 383 residues: Acetylornithine deacetylase (383 aa).

Histidine 80 is a Zn(2+) binding site. Aspartate 82 is an active-site residue. Aspartate 112 provides a ligand contact to Zn(2+). Glutamate 144 is an active-site residue. The Zn(2+) site is built by glutamate 145, glutamate 169, and histidine 355.

This sequence belongs to the peptidase M20A family. ArgE subfamily. As to quaternary structure, homodimer. Zn(2+) serves as cofactor. It depends on Co(2+) as a cofactor. Glutathione is required as a cofactor.

It is found in the cytoplasm. It catalyses the reaction N(2)-acetyl-L-ornithine + H2O = L-ornithine + acetate. Its pathway is amino-acid biosynthesis; L-arginine biosynthesis; L-ornithine from N(2)-acetyl-L-ornithine (linear): step 1/1. Its function is as follows. Catalyzes the hydrolysis of the amide bond of N(2)-acetylated L-amino acids. Cleaves the acetyl group from N-acetyl-L-ornithine to form L-ornithine, an intermediate in L-arginine biosynthesis pathway, and a branchpoint in the synthesis of polyamines. This is Acetylornithine deacetylase from Escherichia coli O8 (strain IAI1).